Consider the following 233-residue polypeptide: Phosphoglycolate phosphatase (233 aa).

D9 functions as the Nucleophile in the catalytic mechanism. The Mg(2+) site is built by D9 and D11. K154 is a substrate binding site. D177 and D181 together coordinate Mg(2+).

It belongs to the archaeal SPP-like hydrolase family. The cofactor is Mg(2+).

The enzyme catalyses 2-phosphoglycolate + H2O = glycolate + phosphate. Catalyzes the dephosphorylation of 2-phosphoglycolate. In Pyrococcus abyssi (strain GE5 / Orsay), this protein is Phosphoglycolate phosphatase.